The chain runs to 645 residues: Putative bifunctional exonuclease/endonuclease protein MT2247 (645 aa).

The 164-residue stretch at 44–207 folds into the Exonuclease domain; it reads VVVDLETTGG…DDARATVDVL (164 aa). The GIY-YIG domain maps to 248-326; that stretch reads HRPGVYLFRG…LSTHAPPYNR (79 aa). A disordered region spans residues 603–645; sequence WQSDLPTEPHPSREQLFGRTGVDCRTGPPQPLLPGRQPFSTAG. The segment covering 635 to 645 has biased composition (low complexity); the sequence is LPGRQPFSTAG.

The polypeptide is Putative bifunctional exonuclease/endonuclease protein MT2247 (Mycobacterium tuberculosis (strain CDC 1551 / Oshkosh)).